The sequence spans 233 residues: Phosducin-like protein C2A9.09 (233 aa).

The Phosducin domain occupies 58 to 212; it reads EDEEDDEFLQ…DIAALKDPQN (155 aa). Positions 86 to 233 are thioredoxin fold; it reads FGSVYPISKP…VNDDLDDDFD (148 aa). A disordered region spans residues 207–233; that stretch reads LKDPQNAEDELGKRDSSVNDDLDDDFD. S222 and S223 each carry phosphoserine. Residues 224 to 233 show a composition bias toward acidic residues; that stretch reads VNDDLDDDFD.

This sequence belongs to the phosducin family.

The protein is Phosducin-like protein C2A9.09 of Schizosaccharomyces pombe (strain 972 / ATCC 24843) (Fission yeast).